The primary structure comprises 339 residues: Phenylalanine--tRNA ligase alpha subunit (339 aa).

Glu254 serves as a coordination point for Mg(2+).

This sequence belongs to the class-II aminoacyl-tRNA synthetase family. Phe-tRNA synthetase alpha subunit type 1 subfamily. As to quaternary structure, tetramer of two alpha and two beta subunits. Mg(2+) serves as cofactor.

The protein resides in the cytoplasm. It catalyses the reaction tRNA(Phe) + L-phenylalanine + ATP = L-phenylalanyl-tRNA(Phe) + AMP + diphosphate + H(+). In Clostridium tetani (strain Massachusetts / E88), this protein is Phenylalanine--tRNA ligase alpha subunit.